The following is a 468-amino-acid chain: Glutamate--tRNA ligase (468 aa).

The 'HIGH' region motif lies at 12 to 22 (PSPTGMMHIGT). Positions 238-242 (KLSKR) match the 'KMSKS' region motif. K241 contacts ATP.

The protein belongs to the class-I aminoacyl-tRNA synthetase family. Glutamate--tRNA ligase type 1 subfamily. Monomer.

It is found in the cytoplasm. It carries out the reaction tRNA(Glu) + L-glutamate + ATP = L-glutamyl-tRNA(Glu) + AMP + diphosphate. Its function is as follows. Catalyzes the attachment of glutamate to tRNA(Glu) in a two-step reaction: glutamate is first activated by ATP to form Glu-AMP and then transferred to the acceptor end of tRNA(Glu). This chain is Glutamate--tRNA ligase, found in Phenylobacterium zucineum (strain HLK1).